The primary structure comprises 119 residues: NADH dehydrogenase [ubiquinone] 1 subunit C2 (119 aa).

Residues 56–75 (GLHRQLLYITAFFFAGYYLV) form a helical membrane-spanning segment.

Belongs to the complex I NDUFC2 subunit family. As to quaternary structure, complex I is composed of 45 different subunits. Interacts with TMEM242.

It is found in the mitochondrion inner membrane. In terms of biological role, accessory subunit of the mitochondrial membrane respiratory chain NADH dehydrogenase (Complex I), that is believed not to be involved in catalysis but required for the complex assembly. Complex I functions in the transfer of electrons from NADH to the respiratory chain. The immediate electron acceptor for the enzyme is believed to be ubiquinone. The protein is NADH dehydrogenase [ubiquinone] 1 subunit C2 of Pongo pygmaeus (Bornean orangutan).